Here is a 78-residue protein sequence, read N- to C-terminus: Small ribosomal subunit protein bS18 (78 aa).

The protein belongs to the bacterial ribosomal protein bS18 family. In terms of assembly, part of the 30S ribosomal subunit. Forms a tight heterodimer with protein bS6.

Binds as a heterodimer with protein bS6 to the central domain of the 16S rRNA, where it helps stabilize the platform of the 30S subunit. The polypeptide is Small ribosomal subunit protein bS18 (Rhodospirillum rubrum (strain ATCC 11170 / ATH 1.1.1 / DSM 467 / LMG 4362 / NCIMB 8255 / S1)).